Reading from the N-terminus, the 215-residue chain is Extracellular small neutral protease (215 aa).

The first 30 residues, 1–30, serve as a signal peptide directing secretion; it reads MRMTRAASALAGLGLAVAAALGSVAPASAA. Ca(2+) is bound at residue threonine 152. Histidine 157 contributes to the Zn(2+) binding site. Glutamate 158 is an active-site residue. 2 residues coordinate Zn(2+): histidine 161 and aspartate 167. Cysteines 173 and 186 form a disulfide.

Belongs to the peptidase M7 family. It depends on Zn(2+) as a cofactor.

The protein resides in the secreted. It catalyses the reaction Hydrolyzes proteins with a preference for Tyr or Phe in the P1' position. Has no action on amino-acid p-nitroanilides.. This Streptomyces coelicolor protein is Extracellular small neutral protease (snpA).